An 89-amino-acid polypeptide reads, in one-letter code: Barrier-to-autointegration factor 1 (89 aa).

It belongs to the BAF family. In terms of assembly, interacts with emr-1 and lem-2. Interacts with lem-4l, leading to decreased phosphorylation by VRK1 and promoting dephosphorylation by protein phosphatase 2A (PP2A). In terms of processing, phosphorylated by vrk-1. Phosphorylation by vrk-1 in mitosis is essential to achieve correct timing of recruitment of nuclear envelope components during nuclear envelope assembly. Dephosphorylated by protein phosphatase 2A (PP2A) following interaction with lem-4l during mitotic exit, leading to mitotic nuclear envelope reassembly.

The protein localises to the nucleus. DNA-binding protein which plays an essential role in nuclear envelope formation. Required for normal chromosome segregation during mitosis. Associates with the nuclear lamina via its interaction with LEM domain containing proteins emr-1 and lem-2. In association with lem-3, plays a role in radiation-induced DNA damage repair response. This Caenorhabditis elegans protein is Barrier-to-autointegration factor 1 (baf-1).